Here is a 244-residue protein sequence, read N- to C-terminus: Small ribosomal subunit protein uS3 (244 aa).

Residues isoleucine 39–glutamate 110 form the KH type-2 domain. The tract at residues glycine 221–serine 244 is disordered. The segment covering glutamine 233–serine 244 has biased composition (basic and acidic residues).

It belongs to the universal ribosomal protein uS3 family. In terms of assembly, part of the 30S ribosomal subunit. Forms a tight complex with proteins S10 and S14.

Its function is as follows. Binds the lower part of the 30S subunit head. Binds mRNA in the 70S ribosome, positioning it for translation. The sequence is that of Small ribosomal subunit protein uS3 from Prochlorococcus marinus (strain MIT 9515).